The following is a 624-amino-acid chain: Glyco-Gag protein (624 aa).

The Cytoplasmic segment spans residues 1-63 (LGDVPGTSGA…FLPSVWNRSR (63 aa)). A helical transmembrane segment spans residues 64 to 86 (AARLVCCSIVLCCLCLAVFLYWS). Topologically, residues 87 to 624 (ENMGQTVTTP…PQTSLLALDD (538 aa)) are extracellular. An N-linked (GlcNAc...) asparagine; by host glycan is attached at Asn113. Composition is skewed to pro residues over residues 200 to 209 (PSLLPEPPLS) and 247 to 258 (DPPPYRDPGPPP). 2 disordered regions span residues 200–284 (PSLL…ASRL) and 290–309 (LPVADSTTSQAFPLRSGGNG). The N-linked (GlcNAc...) asparagine; by host glycan is linked to Asn478. Basic and acidic residues-rich tracts occupy residues 520-552 (RETPEEREERIKRETEEKEERRRAEDEQKEKER) and 572-605 (KQDRQGGERRRPQLDKDQCAYCKEKGHWAKDCPK). Residues 520 to 624 (RETPEEREER…PQTSLLALDD (105 aa)) form a disordered region.

Glycosylated by host. In terms of processing, cleaved by host near the middle of the molecule, releasing the c-terminal half containing capsid and nucleoprotein domains op GAG.

The protein resides in the host cell membrane. Functionally, plays a role in viral particle release. Presumably acts by facilitating the fission of the virion bud at the cell surface. May prevent the antiviral activity of murine APOBEC3. In Mus musculus (Mouse), this protein is Glyco-Gag protein.